The following is a 117-amino-acid chain: Holo-[acyl-carrier-protein] synthase (117 aa).

Residues aspartate 6 and glutamate 55 each contribute to the Mg(2+) site.

The protein belongs to the P-Pant transferase superfamily. AcpS family. Requires Mg(2+) as cofactor.

It localises to the cytoplasm. It catalyses the reaction apo-[ACP] + CoA = holo-[ACP] + adenosine 3',5'-bisphosphate + H(+). Transfers the 4'-phosphopantetheine moiety from coenzyme A to a Ser of acyl-carrier-protein. In Chlorobaculum parvum (strain DSM 263 / NCIMB 8327) (Chlorobium vibrioforme subsp. thiosulfatophilum), this protein is Holo-[acyl-carrier-protein] synthase.